Here is a 505-residue protein sequence, read N- to C-terminus: ATP synthase subunit alpha (505 aa).

An ATP-binding site is contributed by 169–176; sequence GDRQIGKT.

It belongs to the ATPase alpha/beta chains family. As to quaternary structure, F-type ATPases have 2 components, CF(1) - the catalytic core - and CF(0) - the membrane proton channel. CF(1) has five subunits: alpha(3), beta(3), gamma(1), delta(1), epsilon(1). CF(0) has three main subunits: a(1), b(2) and c(9-12). The alpha and beta chains form an alternating ring which encloses part of the gamma chain. CF(1) is attached to CF(0) by a central stalk formed by the gamma and epsilon chains, while a peripheral stalk is formed by the delta and b chains.

Its subcellular location is the cell inner membrane. It carries out the reaction ATP + H2O + 4 H(+)(in) = ADP + phosphate + 5 H(+)(out). Functionally, produces ATP from ADP in the presence of a proton gradient across the membrane. The alpha chain is a regulatory subunit. The sequence is that of ATP synthase subunit alpha from Desulfosudis oleivorans (strain DSM 6200 / JCM 39069 / Hxd3) (Desulfococcus oleovorans).